The following is a 280-amino-acid chain: DNA repair protein XRCC2 (280 aa).

Serine 10 carries the post-translational modification Phosphoserine.

Belongs to the RecA family. RAD51 subfamily. Interacts with RAD51D. Part of the BCDX2 complex consisting of RAD51B, RAD51C, RAD51D and XRCC2; the complex has a ring-like structure arranged into a flat disk around a central channel. In the absence of DNA, the BCDX2 subcomplex XRCC2:RAD51D formed a multimeric ring structure; in the presence of single-stranded DNA it formed a filamentous structure with the ssDNA.

It localises to the nucleus. The protein resides in the cytoplasm. Its subcellular location is the cytoskeleton. It is found in the microtubule organizing center. The protein localises to the centrosome. Functionally, involved in the homologous recombination repair (HRR) pathway of double-stranded DNA, thought to repair chromosomal fragmentation, translocations and deletions. Part of the RAD51 paralog protein complex BCDX2 which acts in the BRCA1-BRCA2-dependent HR pathway. Upon DNA damage, BCDX2 acts downstream of BRCA2 recruitment and upstream of RAD51 recruitment. BCDX2 binds predominantly to the intersection of the four duplex arms of the Holliday junction and to junction of replication forks. The BCDX2 complex was originally reported to bind single-stranded DNA, single-stranded gaps in duplex DNA and specifically to nicks in duplex DNA. This Homo sapiens (Human) protein is DNA repair protein XRCC2 (XRCC2).